Consider the following 344-residue polypeptide: Arginine N-succinyltransferase (344 aa).

Leu-125 serves as a coordination point for succinyl-CoA. Catalysis depends on His-229, which acts as the Proton donor.

It belongs to the arginine N-succinyltransferase family.

The enzyme catalyses succinyl-CoA + L-arginine = N(2)-succinyl-L-arginine + CoA + H(+). It participates in amino-acid degradation; L-arginine degradation via AST pathway; L-glutamate and succinate from L-arginine: step 1/5. Functionally, catalyzes the transfer of succinyl-CoA to arginine to produce N(2)-succinylarginine. This Shigella boydii serotype 18 (strain CDC 3083-94 / BS512) protein is Arginine N-succinyltransferase.